The following is a 322-amino-acid chain: Ferredoxin--NADP reductase (322 aa).

Aspartate 34, glutamine 42, tyrosine 47, valine 87, phenylalanine 120, aspartate 279, and threonine 320 together coordinate FAD.

Belongs to the ferredoxin--NADP reductase type 2 family. In terms of assembly, homodimer. The cofactor is FAD.

It carries out the reaction 2 reduced [2Fe-2S]-[ferredoxin] + NADP(+) + H(+) = 2 oxidized [2Fe-2S]-[ferredoxin] + NADPH. The polypeptide is Ferredoxin--NADP reductase (Streptococcus sanguinis (strain SK36)).